The sequence spans 570 residues: Urease subunit alpha (570 aa).

Residues 131–570 (GGMDSHIHFI…LPMAQRYFLF (440 aa)) enclose the Urease domain. 3 residues coordinate Ni(2+): H136, H138, and K219. K219 is subject to N6-carboxylysine. H221 lines the substrate pocket. The Ni(2+) site is built by H248 and H274. H322 functions as the Proton donor in the catalytic mechanism. Ni(2+) is bound at residue D362.

It belongs to the metallo-dependent hydrolases superfamily. Urease alpha subunit family. In terms of assembly, heterotrimer of UreA (gamma), UreB (beta) and UreC (alpha) subunits. Three heterotrimers associate to form the active enzyme. Requires Ni cation as cofactor. In terms of processing, carboxylation allows a single lysine to coordinate two nickel ions.

It localises to the cytoplasm. It carries out the reaction urea + 2 H2O + H(+) = hydrogencarbonate + 2 NH4(+). It participates in nitrogen metabolism; urea degradation; CO(2) and NH(3) from urea (urease route): step 1/1. The protein is Urease subunit alpha of Sinorhizobium medicae (strain WSM419) (Ensifer medicae).